The following is a 1305-amino-acid chain: DNA-directed DNA polymerase (1305 aa).

It belongs to the DNA polymerase type-C family.

The catalysed reaction is DNA(n) + a 2'-deoxyribonucleoside 5'-triphosphate = DNA(n+1) + diphosphate. Replicates viral genomic DNA. This chain is DNA-directed DNA polymerase, found in Bacillus pumilus (Bacillus mesentericus).